A 79-amino-acid chain; its full sequence is Defensin-like protein 3 (79 aa).

The N-terminal stretch at 1-29 is a signal peptide; that stretch reads MAKFASIITLLFAALVVFAAFEAPTMVEA. Disulfide bonds link Cys32–Cys79, Cys43–Cys64, Cys49–Cys73, and Cys53–Cys75.

It belongs to the DEFL family.

It is found in the secreted. In terms of biological role, possesses antifungal activity sensitive to inorganic cations. The polypeptide is Defensin-like protein 3 (AFP3) (Brassica napus (Rape)).